The chain runs to 151 residues: Regulatory protein RecX (151 aa).

The protein belongs to the RecX family.

The protein resides in the cytoplasm. Its function is as follows. Modulates RecA activity. The sequence is that of Regulatory protein RecX from Haemophilus ducreyi (strain 35000HP / ATCC 700724).